Here is a 516-residue protein sequence, read N- to C-terminus: Exoglucanase 1 (516 aa).

An N-terminal signal peptide occupies residues 1-17 (MRASLLAFSLAAAVAGG). The tract at residues 18-445 (QQAGTLTAKR…GHLGISPFSG (428 aa)) is catalytic. Asparagine 45 carries an N-linked (GlcNAc...) asparagine glycan. The active-site Nucleophile is glutamate 223. The active-site Proton donor is glutamate 228. N-linked (GlcNAc...) asparagine glycosylation is present at asparagine 281. Residues 444–481 (SGGSSGTPPSNPSSSASPTSSTAKPSSTSTASNPSGTG) form a disordered region. The linker stretch occupies residues 446-480 (GSSGTPPSNPSSSASPTSSTAKPSSTSTASNPSGT). The segment covering 449–481 (GTPPSNPSSSASPTSSTAKPSSTSTASNPSGTG) has biased composition (low complexity). The 37-residue stretch at 480–516 (TGAAHWAQCGGIGFSGPTTCPEPYTCAKDHDIYSQCV) folds into the CBM1 domain. 2 disulfides stabilise this stretch: cysteine 488–cysteine 505 and cysteine 499–cysteine 515.

The protein belongs to the glycosyl hydrolase 7 (cellulase C) family.

The protein resides in the secreted. It catalyses the reaction Hydrolysis of (1-&gt;4)-beta-D-glucosidic linkages in cellulose and cellotetraose, releasing cellobiose from the non-reducing ends of the chains.. This is Exoglucanase 1 (cbh-1) from Neurospora crassa (strain ATCC 24698 / 74-OR23-1A / CBS 708.71 / DSM 1257 / FGSC 987).